The following is a 215-amino-acid chain: Pyrrolidone-carboxylate peptidase (215 aa).

Residues Glu-78, Cys-141, and His-165 contribute to the active site.

It belongs to the peptidase C15 family. Homotetramer.

It localises to the cytoplasm. The enzyme catalyses Release of an N-terminal pyroglutamyl group from a polypeptide, the second amino acid generally not being Pro.. Functionally, removes 5-oxoproline from various penultimate amino acid residues except L-proline. The sequence is that of Pyrrolidone-carboxylate peptidase from Lactobacillus johnsonii (strain CNCM I-12250 / La1 / NCC 533).